A 331-amino-acid chain; its full sequence is GTPase Obg (331 aa).

In terms of domain architecture, Obg spans 1–159 (MQFIDQARIA…RELQLELKLL (159 aa)). Positions 160–328 (AEVGLVGLPN…LLQQVWQELG (169 aa)) constitute an OBG-type G domain. Residues 166–173 (GLPNAGKS), 191–195 (FTTLV), 213–216 (DIPG), 280–283 (SKSE), and 309–311 (SAV) contribute to the GTP site. Residues serine 173 and threonine 193 each coordinate Mg(2+).

Belongs to the TRAFAC class OBG-HflX-like GTPase superfamily. OBG GTPase family. In terms of assembly, monomer. The cofactor is Mg(2+).

The protein resides in the cytoplasm. Functionally, an essential GTPase which binds GTP, GDP and possibly (p)ppGpp with moderate affinity, with high nucleotide exchange rates and a fairly low GTP hydrolysis rate. Plays a role in control of the cell cycle, stress response, ribosome biogenesis and in those bacteria that undergo differentiation, in morphogenesis control. The chain is GTPase Obg from Synechococcus sp. (strain RCC307).